The following is a 175-amino-acid chain: Protein ppBat (175 aa).

2 residues coordinate Zn(2+): Cys74 and Cys111. Positions 161 and 164 each coordinate riboflavin.

As to quaternary structure, homodimer.

Functionally, binds flavin derivatives, such as lumichrome, riboflavin, FMN, and FAD. May act as a flavin storage protein. Appears to lack proteolytic or chaperone activities. The polypeptide is Protein ppBat (Bacteroides thetaiotaomicron (strain ATCC 29148 / DSM 2079 / JCM 5827 / CCUG 10774 / NCTC 10582 / VPI-5482 / E50)).